The sequence spans 527 residues: Putative GTP-binding protein 6 (527 aa).

One can recognise a Hflx-type G domain in the interval 306 to 470 (PIISILGYTN…QVETAVMKST (165 aa)). GTP-binding positions include 312–319 (GYTNSGKT), 338–342 (FATLD), 360–363 (DTIG), 429–432 (NKID), and 448–450 (SAL). Residues Thr-319 and Thr-340 each contribute to the Mg(2+) site.

This sequence belongs to the TRAFAC class OBG-HflX-like GTPase superfamily. HflX GTPase family. The cofactor is Mg(2+).

This chain is Putative GTP-binding protein 6 (gtpbp6), found in Xenopus laevis (African clawed frog).